The primary structure comprises 314 residues: NF-kappa-B inhibitor alpha (314 aa).

Residues 1-40 (MFQPAGHGQDWAMEGPRDGLKKERLVDDRHDSGLDSMKDE) form a disordered region. Basic and acidic residues predominate over residues 15–40 (GPRDGLKKERLVDDRHDSGLDSMKDE). Lysine 21 participates in a covalent cross-link: Glycyl lysine isopeptide (Lys-Gly) (interchain with G-Cter in SUMO); alternate. Lysine 21 is covalently cross-linked (Glycyl lysine isopeptide (Lys-Gly) (interchain with G-Cter in ubiquitin); alternate). Lysine 22 is covalently cross-linked (Glycyl lysine isopeptide (Lys-Gly) (interchain with G-Cter in ubiquitin)). Positions 30 to 36 (HDSGLDS) match the Destruction motif motif. The residue at position 32 (serine 32) is a Phosphoserine; by IKKB. Phosphoserine; by IKKA, IKKB, IKKE and TBK1 is present on serine 36. At tyrosine 42 the chain carries Phosphotyrosine. Residues 45 to 54 (MVKELREIRL) carry the Nuclear export signal motif. ANK repeat units follow at residues 73-103 (DGDSFLHLAIIHEEKPLTMEVIGQVKGDLAF), 110-139 (LQQTPLHLAVITNQPGIAEALLKAGCDPEL), 143-172 (RGNTPLHLACEQGCLASVAVLTQTCTPQHL), 182-211 (NGHTCLHLASIHGYLAIVEHLVTLGADVNA), and 216-245 (NGRTALHLAVDLQNPDLVSLLLKCGADVNR). Residues 110-120 (LQQTPLHLAVI) carry the Nuclear import signal motif. Residues asparagine 210 and asparagine 244 each carry the (3S)-3-hydroxyasparagine; by HIF1AN modification. A phosphoserine; by CK2 mark is found at serine 283 and serine 288. Threonine 291 is modified (phosphothreonine; by CK2). Serine 293 is modified (phosphoserine; by CK2). Threonine 296 is modified (phosphothreonine).

The protein belongs to the NF-kappa-B inhibitor family. In terms of assembly, interacts with RELA; the interaction requires the nuclear import signal. Part of a 70-90 kDa complex at least consisting of CHUK, IKBKB, NFKBIA, RELA, ELP1 and MAP3K14. Interacts with NKIRAS1 and NKIRAS2. Interacts with RWDD3; the interaction enhances sumoylation. Interacts with PRMT2. Interacts with PRKACA in platelets; this interaction is disrupted by thrombin and collagen. Interacts with MEFV. Interacts with DDRGK1; positively regulates NFKBIA phosphorylation and degradation. Interacts with HNRNPA2B1; the interaction may be mediated by the RRM2 domain of HNRNPA2B1, and HNRNPA2B1 may interact simultaneously with FAM76B and either NFKBIA or NFKBIE to form a complex. Phosphorylated at Ser-32 and Ser-36 by IKKA/CHUK and IKKB/IKBKB; disables inhibition of NF-kappa-B DNA-binding activity. Phosphorylation at positions 32 and 36 is prerequisite to recognition by the SCF(FBXW11) and SCF(BTRC) complexes, leading to polyubiquitination and subsequent degradation. In terms of processing, polyubiquitinated at Lys-21 and/or Lys-22 following phosphorylation at Ser-32 and Ser-36. Monoubiquitinated at Lys-21 and/or Lys-22 by UBE2D3. Ubiquitin chain elongation is then performed by CDC34 in cooperation with the SCF(FBXW11) E3 ligase complex, building ubiquitin chains from the UBE2D3-primed NFKBIA-linked ubiquitin. The resulting polyubiquitination leads to protein degradation. Also ubiquitinated by the SCF(BTRC) complex following stimulus-dependent phosphorylation at Ser-32 and Ser-36. Deubiquitinated by USP38, leading to NF-kappa-B inhibition. Post-translationally, sumoylated; sumoylation requires the presence of the nuclear import signal. Sumoylation blocks ubiquitination and proteasome-mediated degradation of the protein thereby increasing the protein stability. Hydroxylated by HIF1AN. As to expression, highly expressed in lymph node, thymus followed by liver, brain, muscle, kidney, gastrointestinal and reproductive tract.

Its subcellular location is the cytoplasm. It is found in the nucleus. Functionally, inhibits the activity of dimeric NF-kappa-B/REL complexes by trapping REL (RELA/p65 and NFKB1/p50) dimers in the cytoplasm by masking their nuclear localization signals. On cellular stimulation by immune and pro-inflammatory responses, becomes phosphorylated promoting ubiquitination and degradation, enabling the dimeric RELA to translocate to the nucleus and activate transcription. The chain is NF-kappa-B inhibitor alpha (Nfkbia) from Mus musculus (Mouse).